We begin with the raw amino-acid sequence, 133 residues long: Nickel-responsive regulator (133 aa).

Positions 76, 87, 89, and 95 each coordinate Ni(2+).

Belongs to the transcriptional regulatory CopG/NikR family. As to quaternary structure, homotetramer. It depends on Ni(2+) as a cofactor.

Transcriptional repressor of the nikABCDE operon. Is active in the presence of excessive concentrations of intracellular nickel. In Escherichia coli (strain SMS-3-5 / SECEC), this protein is Nickel-responsive regulator.